We begin with the raw amino-acid sequence, 254 residues long: Ribosomal RNA large subunit methyltransferase E (254 aa).

Residues 1–28 are disordered; sequence MTTPPRGPDGRPLKVRVKKSRGRTTSSQ. The segment covering 13–22 has biased composition (basic residues); that stretch reads LKVRVKKSRG. The S-adenosyl-L-methionine site is built by glycine 80, tryptophan 82, aspartate 103, aspartate 119, and aspartate 143. The active-site Proton acceptor is lysine 183. Residues 231–254 form a disordered region; that stretch reads DRAETDDAGTDGTGTAEAQAPRDQ.

The protein belongs to the class I-like SAM-binding methyltransferase superfamily. RNA methyltransferase RlmE family.

It localises to the cytoplasm. The enzyme catalyses uridine(2552) in 23S rRNA + S-adenosyl-L-methionine = 2'-O-methyluridine(2552) in 23S rRNA + S-adenosyl-L-homocysteine + H(+). Functionally, specifically methylates the uridine in position 2552 of 23S rRNA at the 2'-O position of the ribose in the fully assembled 50S ribosomal subunit. The sequence is that of Ribosomal RNA large subunit methyltransferase E from Xanthobacter autotrophicus (strain ATCC BAA-1158 / Py2).